A 570-amino-acid polypeptide reads, in one-letter code: Methyl-coenzyme M reductase subunit alpha (570 aa).

Glutamine 161 is a coenzyme F430 binding site. Coenzyme B is bound by residues arginine 239, 270-271 (KH), and arginine 284. Histidine 271 is modified (pros-methylhistidine). Residue arginine 285 is modified to 5-methylarginine. Coenzyme M-binding residues include tyrosine 346 and phenylalanine 464. At glycine 465 the chain carries 1-thioglycine. A (Z)-2,3-didehydroaspartate modification is found at aspartate 470. Position 472 is an S-methylcysteine (cysteine 472).

It belongs to the methyl-coenzyme M reductase alpha subunit family. In terms of assembly, MCR is a hexamer of two alpha, two beta, and two gamma chains, forming a dimer of heterotrimers. Requires coenzyme F430 as cofactor. Post-translationally, the alpha subunit contains five modified amino acids near the active site region. Is methylated on His-271, Arg-285 and Cys-472, probably by the action of specific S-adenosylmethionine-dependent methyltransferases. Also contains a thioglycine at position 465, forming a thiopeptide bond. Contains a didehydroaspartate residue at position 470. The methylation on C5 of Arg-285 is a post-translational methylation not essential in vivo, but which plays a role for the stability and structural integrity of MCR. Does not show a methylation at Gln-420, as shown for M.marburgensis.

The protein localises to the cytoplasm. The enzyme catalyses coenzyme B + methyl-coenzyme M = methane + coenzyme M-coenzyme B heterodisulfide. Its pathway is one-carbon metabolism; methyl-coenzyme M reduction; methane from methyl-coenzyme M: step 1/1. Functionally, component of the methyl-coenzyme M reductase (MCR) I that catalyzes the reductive cleavage of methyl-coenzyme M (CoM-S-CH3 or 2-(methylthio)ethanesulfonate) using coenzyme B (CoB or 7-mercaptoheptanoylthreonine phosphate) as reductant which results in the production of methane and the mixed heterodisulfide of CoB and CoM (CoM-S-S-CoB). This is the final step in methanogenesis. This Methanosarcina barkeri (strain Fusaro / DSM 804) protein is Methyl-coenzyme M reductase subunit alpha (mcrA).